Reading from the N-terminus, the 139-residue chain is Crossover junction endodeoxyribonuclease Hje (139 aa).

Mg(2+) is bound by residues Glu-10, Asp-39, and Glu-52.

It belongs to the Holliday junction resolvase Hjc family. Hje subfamily. Homodimer. Requires Mg(2+) as cofactor.

The enzyme catalyses Endonucleolytic cleavage at a junction such as a reciprocal single-stranded crossover between two homologous DNA duplexes (Holliday junction).. Functionally, a structure-specific endonuclease that resolves Holliday junction (HJ) intermediates during genetic recombination. Acts only on 4-way DNA junctions in a sequence non-specific manner; introduces paired nicks in opposing strands 2 bases 3' of the point of strand exchange only on continuous strands of 4-way junction DNA. Cleaves both mobile and immobile junctions. Its function is as follows. Redundant function with Holliday junction resolvase Hjc. This chain is Crossover junction endodeoxyribonuclease Hje, found in Sulfolobus acidocaldarius (strain ATCC 33909 / DSM 639 / JCM 8929 / NBRC 15157 / NCIMB 11770).